Consider the following 245-residue polypeptide: UPF0246 protein Cgl1995/cg2186 (245 aa).

It belongs to the UPF0246 family.

The protein is UPF0246 protein Cgl1995/cg2186 of Corynebacterium glutamicum (strain ATCC 13032 / DSM 20300 / JCM 1318 / BCRC 11384 / CCUG 27702 / LMG 3730 / NBRC 12168 / NCIMB 10025 / NRRL B-2784 / 534).